A 151-amino-acid chain; its full sequence is Large ribosomal subunit protein bL9 (151 aa).

It belongs to the bacterial ribosomal protein bL9 family.

Binds to the 23S rRNA. The protein is Large ribosomal subunit protein bL9 of Dehalococcoides mccartyi (strain ATCC BAA-2266 / KCTC 15142 / 195) (Dehalococcoides ethenogenes (strain 195)).